A 97-amino-acid chain; its full sequence is Large ribosomal subunit protein eL21 (97 aa).

This sequence belongs to the eukaryotic ribosomal protein eL21 family.

The sequence is that of Large ribosomal subunit protein eL21 from Methanococcus vannielii (strain ATCC 35089 / DSM 1224 / JCM 13029 / OCM 148 / SB).